The sequence spans 246 residues: 14-3-3 protein eta (246 aa).

Gly2 is modified (N-acetylglycine). Ser25 and Ser59 each carry phosphoserine.

The protein belongs to the 14-3-3 family. As to quaternary structure, homodimer. Interacts with many nuclear hormone receptors and cofactors including AR, ESR1, ESR2, MC2R, NR3C1, NRIP1, PPARBP and THRA. Interacts with ABL1 (phosphorylated form); the interaction retains it in the cytoplasm. Interacts with ARHGEF28 and CDK16. Weakly interacts with CDKN1B. Interacts with GAB2. Interacts with KCNK18 in a phosphorylation-dependent manner. Interacts with SAMSN1. Interacts with the 'Ser-241' phosphorylated form of PDPK1. Interacts with the 'Thr-369' phosphorylated form of DAPK2. Interacts with PI4KB, TBC1D22A and TBC1D22B. Interacts with SLITRK1. Interacts with MEFV. Phosphorylated on Ser-59 by protein kinase C delta type catalytic subunit in a sphingosine-dependent fashion. As to expression, expressed mainly in the brain and present in other tissues albeit at lower levels.

In terms of biological role, adapter protein implicated in the regulation of a large spectrum of both general and specialized signaling pathways. Binds to a large number of partners, usually by recognition of a phosphoserine or phosphothreonine motif. Binding generally results in the modulation of the activity of the binding partner. Negatively regulates the kinase activity of PDPK1. In Homo sapiens (Human), this protein is 14-3-3 protein eta (YWHAH).